Consider the following 259-residue polypeptide: Type III pantothenate kinase (259 aa).

ATP is bound at residue 9 to 16; it reads DAGNSRIK. Substrate is bound by residues Tyr93 and 100–103; that span reads GSDR. Residue Asp102 is the Proton acceptor of the active site. Thr126 lines the ATP pocket. Position 190 (Thr190) interacts with substrate.

It belongs to the type III pantothenate kinase family. As to quaternary structure, homodimer. NH4(+) is required as a cofactor. The cofactor is K(+).

The protein resides in the cytoplasm. The catalysed reaction is (R)-pantothenate + ATP = (R)-4'-phosphopantothenate + ADP + H(+). The protein operates within cofactor biosynthesis; coenzyme A biosynthesis; CoA from (R)-pantothenate: step 1/5. Catalyzes the phosphorylation of pantothenate (Pan), the first step in CoA biosynthesis. The chain is Type III pantothenate kinase from Burkholderia pseudomallei (strain K96243).